Reading from the N-terminus, the 127-residue chain is Phosphoribosyl-AMP cyclohydrolase (127 aa).

Residue Asp-83 participates in Mg(2+) binding. Cys-84 provides a ligand contact to Zn(2+). Residues Asp-85 and Asp-87 each contribute to the Mg(2+) site. Residues Cys-100 and Cys-107 each contribute to the Zn(2+) site.

Belongs to the PRA-CH family. Homodimer. It depends on Mg(2+) as a cofactor. Requires Zn(2+) as cofactor.

The protein resides in the cytoplasm. It catalyses the reaction 1-(5-phospho-beta-D-ribosyl)-5'-AMP + H2O = 1-(5-phospho-beta-D-ribosyl)-5-[(5-phospho-beta-D-ribosylamino)methylideneamino]imidazole-4-carboxamide. It participates in amino-acid biosynthesis; L-histidine biosynthesis; L-histidine from 5-phospho-alpha-D-ribose 1-diphosphate: step 3/9. Its function is as follows. Catalyzes the hydrolysis of the adenine ring of phosphoribosyl-AMP. In Methanocaldococcus jannaschii (strain ATCC 43067 / DSM 2661 / JAL-1 / JCM 10045 / NBRC 100440) (Methanococcus jannaschii), this protein is Phosphoribosyl-AMP cyclohydrolase.